The primary structure comprises 205 residues: Holliday junction branch migration complex subunit RuvA (205 aa).

The interval 1–68 (MIGYLEGTLL…QPKPVLIGFN (68 aa)) is domain I. Residues 69-146 (TEEEKDFFHL…RFADAGHSSA (78 aa)) form a domain II region. The segment at 147–151 (PDVPV) is flexible linker. The interval 152-205 (TGSLADQTVEVLVGQLGYKPNEARLMVAGALKRNPDVSTPEALFDEIFKHGQAQ) is domain III.

This sequence belongs to the RuvA family. Homotetramer. Forms an RuvA(8)-RuvB(12)-Holliday junction (HJ) complex. HJ DNA is sandwiched between 2 RuvA tetramers; dsDNA enters through RuvA and exits via RuvB. An RuvB hexamer assembles on each DNA strand where it exits the tetramer. Each RuvB hexamer is contacted by two RuvA subunits (via domain III) on 2 adjacent RuvB subunits; this complex drives branch migration. In the full resolvosome a probable DNA-RuvA(4)-RuvB(12)-RuvC(2) complex forms which resolves the HJ.

The protein resides in the cytoplasm. The RuvA-RuvB-RuvC complex processes Holliday junction (HJ) DNA during genetic recombination and DNA repair, while the RuvA-RuvB complex plays an important role in the rescue of blocked DNA replication forks via replication fork reversal (RFR). RuvA specifically binds to HJ cruciform DNA, conferring on it an open structure. The RuvB hexamer acts as an ATP-dependent pump, pulling dsDNA into and through the RuvAB complex. HJ branch migration allows RuvC to scan DNA until it finds its consensus sequence, where it cleaves and resolves the cruciform DNA. The sequence is that of Holliday junction branch migration complex subunit RuvA from Desulfosudis oleivorans (strain DSM 6200 / JCM 39069 / Hxd3) (Desulfococcus oleovorans).